The sequence spans 177 residues: Bifunctional protein PyrR (177 aa).

A PRPP-binding motif is present at residues 99–111 (LVLIDDVIYKGRT).

This sequence belongs to the purine/pyrimidine phosphoribosyltransferase family. PyrR subfamily.

The enzyme catalyses UMP + diphosphate = 5-phospho-alpha-D-ribose 1-diphosphate + uracil. Regulates the transcription of the pyrimidine nucleotide (pyr) operon in response to exogenous pyrimidines. Functionally, also displays a weak uracil phosphoribosyltransferase activity which is not physiologically significant. The sequence is that of Bifunctional protein PyrR from Picosynechococcus sp. (strain ATCC 27264 / PCC 7002 / PR-6) (Agmenellum quadruplicatum).